A 283-amino-acid polypeptide reads, in one-letter code: MTKVLVTGAGGQLGLELCRQLKQAGYEVIALTKKMMNIADQRSVRHSFGHYQPDIVVNSAAFTSVDQCEKELDKAYLINGIGAYYTALESTRIGAQYVHISTDYVFNGKGTQPYREDDPLDPKTIYGKSKRLGEELIRLTTKDSTIIRTSWVYGHGGSNFVETMLKLAETKQELRVVSDQIGSPTYTKDLAEAVIKLFSHPPGIYHVSNSGICSWYEFATAIMEESGLETAILSVTTEEYGNKTPRPAYSVLSHRAIEEAGIRPRHWREALREYLQERSSACD.

Belongs to the dTDP-4-dehydrorhamnose reductase family.

Its pathway is spore coat biogenesis; spore coat polysaccharide biosynthesis. This chain is Spore coat polysaccharide biosynthesis protein SpsK (spsK), found in Bacillus subtilis (strain 168).